The chain runs to 792 residues: Kinesin-related protein 2 (792 aa).

2 disordered regions span residues 22 to 50 and 162 to 183; these read TINSRPSLLRKPASSSSQSNDRISYPPST and NNININSNNSSNSNNNILSPVQ. Polar residues predominate over residues 34-50; the sequence is ASSSSQSNDRISYPPST. A coiled-coil region spans residues 284–423; the sequence is RLSLSIQDIK…LEKSRSDEKV (140 aa). Residues 437 to 781 enclose the Kinesin motor domain; that stretch reads NIRVFCRIRP…LRFAAKVNSC (345 aa). Residue 528–535 participates in ATP binding; it reads GQTGSGKT.

The protein belongs to the TRAFAC class myosin-kinesin ATPase superfamily. Kinesin family. NCD subfamily.

It localises to the nucleus. Its subcellular location is the cytoplasm. The protein localises to the cytoskeleton. The protein resides in the spindle. Microtubule-dependent motor that is probably involved in microtubule organization in the mitotic spindle. The polypeptide is Kinesin-related protein 2 (kif2) (Dictyostelium discoideum (Social amoeba)).